The following is a 150-amino-acid chain: Glycophorin-A (150 aa).

Positions 1–19 (MYGKIIFVLLLSEIVSISA) are cleaved as a signal peptide. The Extracellular segment spans residues 20 to 91 (LSTTEVAMHT…QLAHHFSEPE (72 aa)). An O-linked (GalNAc...) serine glycan is attached at serine 21. Threonine 22, threonine 23, and threonine 29 each carry an O-linked (GalNAc...) threonine glycan. Serine 30 carries an O-linked (GalNAc...) serine glycan. Threonine 31 is a glycosylation site (O-linked (GalNAc...) threonine). Serine 32 carries an O-linked (GalNAc...) serine glycan. An O-linked (GalNAc...) threonine glycan is attached at threonine 36. O-linked (GalNAc...) serine glycosylation is found at serine 38 and serine 41. A glycan (O-linked (GalNAc...) threonine) is linked at threonine 44. Asparagine 45 carries an N-linked (GlcNAc...) asparagine glycan. 2 O-linked (GalNAc...) threonine glycosylation sites follow: threonine 52 and threonine 56. Residues serine 63 and serine 66 are each glycosylated (O-linked (GalNAc...) serine). Threonine 69 is a glycosylation site (O-linked (GalNAc...) threonine). A helical membrane pass occupies residues 92-114 (ITLIIFGVMAGVIGTILLISYGI). Topologically, residues 115-150 (RRLIKKSPSDVKPLPSPDTDVPLSSVEIENPETSDQ) are cytoplasmic. The disordered stretch occupies residues 121–150 (SPSDVKPLPSPDTDVPLSSVEIENPETSDQ). Residue threonine 133 is modified to Phosphothreonine. Residues serine 138 and serine 148 each carry the phosphoserine modification.

Belongs to the glycophorin A family. As to quaternary structure, homodimer. Component of the ankyrin-1 complex in the erythrocyte, composed of ANK1, RHCE, RHAG, SLC4A1, EPB42, GYPA, GYPB and AQP1. Interacts with SLC4A1; a GYPA monomer is bound at each end of the SLC4A1 dimer forming a heterotetramer. In terms of assembly, (Microbial infection) Interacts with Streptococcus gordonii hsa protein. (Microbial infection) Interacts (in a sialic acid-independent manner) with P.falciparum MSP1 subunit p83. Post-translationally, the major O-linked glycan are NeuAc-alpha-(2-3)-Gal-beta-(1-3)-[NeuAc-alpha-(2-6)]-GalNAcOH (about 78 %) and NeuAc-alpha-(2-3)-Gal-beta-(1-3)-GalNAcOH (17 %). Minor O-glycans (5 %) include NeuAc-alpha-(2-3)-Gal-beta-(1-3)-[NeuAc-alpha-(2-6)]-GalNAcOH NeuAc-alpha-(2-8)-NeuAc-alpha-(2-3)-Gal-beta-(1-3)-GalNAcOH. About 1% of all O-linked glycans carry blood group A, B and H determinants. They derive from a type-2 precursor core structure, Gal-beta-(1,3)-GlcNAc-beta-1-R, and the antigens are synthesized by addition of fucose (H antigen-specific) and then N-acetylgalactosamine (A antigen-specific) or galactose (B antigen-specific). Specifically O-linked-glycans are NeuAc-alpha-(2-3)-Gal-beta-(1-3)-GalNAcOH-(6-1)-GlcNAc-beta-(4-1)-[Fuc-alpha-(1-2)]-Gal-beta-(3-1)-GalNAc-alpha (about 1%, B antigen-specific) and NeuAc-alpha-(2-3)-Gal-beta-(1-3)-GalNAcOH-(6-1)-GlcNAc-beta-(4-1)-[Fuc-alpha-(1-2)]-Gal-beta (1 %, O antigen-, A antigen- and B antigen-specific).

It localises to the cell membrane. Its function is as follows. Component of the ankyrin-1 complex, a multiprotein complex involved in the stability and shape of the erythrocyte membrane. Glycophorin A is the major intrinsic membrane protein of the erythrocyte. The N-terminal glycosylated segment, which lies outside the erythrocyte membrane, has MN blood group receptors. Appears to be important for the function of SLC4A1 and is required for high activity of SLC4A1. May be involved in translocation of SLC4A1 to the plasma membrane. Functionally, (Microbial infection) Appears to be a receptor for Hepatitis A virus (HAV). In terms of biological role, (Microbial infection) Receptor for P.falciparum erythrocyte-binding antigen 175 (EBA-175); binding of EBA-175 is dependent on sialic acid residues of the O-linked glycans. The protein is Glycophorin-A of Homo sapiens (Human).